A 690-amino-acid chain; its full sequence is MGVRQQLALLLLLLLLLWGLGQPVWPVAVALTLRWLLGDPTCCVLLGLAMLARPWLGPWVPHGLSLAAAALALTLLPARLPPGLRWLPADVIFLAKILHLGLKIRGCLSRQPPDTFVDAFERRARAQPGRALLVWTGPGAGSVTFGELDARACQAAWALKAELGDPASLCAGEPTALLVLASQAVPALCMWLGLAKLGCPTAWINPHGRGMPLAHSVLSSGARVLVVDPDLRESLEEILPKLQAENIRCFYLSHTSPTPGVGALGAALDAAPSHPVPADLRAGITWRSPALFIYTSGTTGLPKPAILTHERVLQMSKMLSLSGATADDVVYTVLPLYHVMGLVVGILGCLDLGATCVLAPKFSTSCFWDDCRQHGVTVILYVGELLRYLCNIPQQPEDRTHTVRLAMGNGLRADVWETFQQRFGPIRIWEVYGSTEGNMGLVNYVGRCGALGKMSCLLRMLSPFELVQFDMEAAEPVRDNQGFCIPVGLGEPGLLLTKVVSQQPFVGYRGPRELSERKLVRNVRQSGDVYYNTGDVLAMDREGFLYFRDRLGDTFRWKGENVSTHEVEGVLSQVDFLQQVNVYGVCVPGCEGKVGMAAVQLAPGQTFDGEKLYQHVRAWLPAYATPHFIRIQDAMEVTSTFKLMKTRLVREGFNVGIVVDPLFVLDNRAQSFRPLTAEMYQAVCEGTWRL.

At 1-30 (MGVRQQLALLLLLLLLLWGLGQPVWPVAVA) the chain is on the cytoplasmic side. 2 consecutive transmembrane segments (helical) span residues 31-51 (LTLRWLLGDPTCCVLLGLAML) and 56-76 (LGPWVPHGLSLAAAALALTLL). The Cytoplasmic segment spans residues 77–690 (PARLPPGLRW…QAVCEGTWRL (614 aa)). An AMP-binding site is contributed by 292–303 (FIYTSGTTGLPK). Serine 501 is subject to Phosphoserine.

The protein belongs to the ATP-dependent AMP-binding enzyme family. In terms of tissue distribution, predominantly expressed in liver.

The protein localises to the endoplasmic reticulum membrane. It is found in the microsome. Its subcellular location is the cell membrane. The catalysed reaction is a fatty acid(in) = a fatty acid(out). The enzyme catalyses cholate + ATP + CoA = choloyl-CoA + AMP + diphosphate. It catalyses the reaction chenodeoxycholate + ATP + CoA = chenodeoxycholoyl-CoA + AMP + diphosphate. It carries out the reaction deoxycholate + ATP + CoA = deoxycholoyl-CoA + AMP + diphosphate. The catalysed reaction is lithocholate + ATP + CoA = lithocholoyl-CoA + AMP + diphosphate. The enzyme catalyses (25R)-3alpha,7alpha,12alpha-trihydroxy-5beta-cholestan-26-oate + ATP + CoA = (25R)-3alpha,7alpha,12alpha-trihydroxy-5beta-cholestan-26-oyl-CoA + AMP + diphosphate. It catalyses the reaction a very long-chain fatty acid + ATP + CoA = a very long-chain fatty acyl-CoA + AMP + diphosphate. It carries out the reaction tetracosanoate + ATP + CoA = tetracosanoyl-CoA + AMP + diphosphate. The catalysed reaction is hexacosanoate + ATP + CoA = hexacosanoyl-CoA + AMP + diphosphate. The enzyme catalyses a long-chain fatty acid + ATP + CoA = a long-chain fatty acyl-CoA + AMP + diphosphate. It catalyses the reaction octadecanoate + ATP + CoA = octadecanoyl-CoA + AMP + diphosphate. It carries out the reaction eicosanoate + ATP + CoA = eicosanoyl-CoA + AMP + diphosphate. With respect to regulation, 3-alpha,7-alpha,12-alpha-trihydroxy-5-beta-cholestanate (THCA) inhibits the activation of cholate. May mediate the import of long-chain fatty acids (LCFA) by facilitating their transport across cell membranes. Also catalyzes the ATP-dependent formation of fatty acyl-CoA using LCFA and very-long-chain fatty acids (VLCFA) as substrates. Mainly functions as a bile acyl-CoA synthetase catalyzing the activation of bile acids via ATP-dependent formation of bile acid CoA thioesters which is necessary for their subsequent conjugation with glycine or taurine. Both primary bile acids (cholic acid and chenodeoxycholic acid) and secondary bile acids (deoxycholic acid and lithocholic acid) are the principal substrates. In vitro, activates 3-alpha,7-alpha,12-alpha-trihydroxy-5-beta-cholestanate ((25R)-3alpha,7alpha,12alpha-trihydroxy-5beta-cholestan-26-oate or THCA), the C27 precursor of cholic acid deriving from the de novo synthesis from cholesterol. Plays an important role in hepatic fatty acid uptake and bile acid reconjugation and recycling but not in de novo synthesis of bile acids. The polypeptide is Long-chain fatty acid transport protein 5 (SLC27A5) (Homo sapiens (Human)).